Reading from the N-terminus, the 168-residue chain is Acetolactate synthase small subunit (168 aa).

An ACT domain is found at 7–82; sequence TLSVLVEDKP…VIKIVEQDDE (76 aa).

Belongs to the acetolactate synthase small subunit family. As to quaternary structure, dimer of large and small chains.

It catalyses the reaction 2 pyruvate + H(+) = (2S)-2-acetolactate + CO2. The protein operates within amino-acid biosynthesis; L-isoleucine biosynthesis; L-isoleucine from 2-oxobutanoate: step 1/4. It functions in the pathway amino-acid biosynthesis; L-valine biosynthesis; L-valine from pyruvate: step 1/4. This Mycobacterium bovis (strain ATCC BAA-935 / AF2122/97) protein is Acetolactate synthase small subunit (ilvH).